We begin with the raw amino-acid sequence, 273 residues long: Large ribosomal subunit protein uL2 (273 aa).

A disordered region spans residues Arg221–Arg262. Over residues Lys253–Arg262 the composition is skewed to basic residues.

Belongs to the universal ribosomal protein uL2 family. In terms of assembly, part of the 50S ribosomal subunit. Forms a bridge to the 30S subunit in the 70S ribosome.

One of the primary rRNA binding proteins. Required for association of the 30S and 50S subunits to form the 70S ribosome, for tRNA binding and peptide bond formation. It has been suggested to have peptidyltransferase activity; this is somewhat controversial. Makes several contacts with the 16S rRNA in the 70S ribosome. The chain is Large ribosomal subunit protein uL2 from Haemophilus ducreyi (strain 35000HP / ATCC 700724).